The following is an 87-amino-acid chain: MSKPVLKASDITDELRDEIFELSSNATANYKLEREIAAYIKKQLDVSQGETWHVIVGKNFGSYVTHEKGYFVYFYIGPLAFLVFKTA.

It belongs to the dynein light chain family. In terms of assembly, homodimer. Cytoplasmic dynein consists of two catalytic heavy chains (HCs) and a number of non-catalytic subunits which present intermediate chains (ICs), light intermediate chains (LICs) and light chains (LCs). Component of the nuclear pore complex (NPC). NPC constitutes the exclusive means of nucleocytoplasmic transport. NPCs allow the passive diffusion of ions and small molecules and the active, nuclear transport receptor-mediated bidirectional transport of macromolecules such as proteins, RNAs, ribonucleoparticles (RNPs), and ribosomal subunits across the nuclear envelope. Due to its 8-fold rotational symmetry, all subunits are present with 8 copies or multiples thereof.

It is found in the cytoplasm. The protein resides in the cytoskeleton. The protein localises to the nucleus. Its subcellular location is the nuclear pore complex. In terms of biological role, acts as one of several non-catalytic accessory components of the cytoplasmic dynein complex that are thought to be involved in linking dynein to cargos and to adapter proteins that regulate dynein function. Cytoplasmic dynein 1 acts as a motor for the intracellular retrograde motility of vesicles and organelles along microtubules. May play a role in changing or maintaining the spatial distribution of cytoskeletal structures. Also a component of the nuclear pore complex. In Kluyveromyces lactis (strain ATCC 8585 / CBS 2359 / DSM 70799 / NBRC 1267 / NRRL Y-1140 / WM37) (Yeast), this protein is Dynein light chain 1, cytoplasmic (DYN2).